The sequence spans 279 residues: MNIENKEITSSWFTNLRDLLCKEFEKIEEEYAQTKGLKPAKFVRSSWQRNGGGGGVMSLMKGAVFEKVGVNISTVFGKISPEFRNEIPGAELDGKFFATGISLVAHLKSPLIPAMHFNTRYIETSKSWFGGGGDLTPFYPEKNETVKFHAAFKEACDKYDSSYYPKFKKQCDEYFYLKHRKEPRGVGGIFYDYLNNGNFEQDFAFTQDVGKALLSVYPEIVRSKLFLPWTAEQKEYQLIRRGRYVEFNLLYDRGTKFGLMTDGNVEAILMSLPPEVKFN.

Substrate is bound at residue Ser-102. Residues His-106 and His-116 each coordinate a divalent metal cation. His-116 functions as the Proton donor in the catalytic mechanism. Substrate is bound at residue 118–120 (NTR). Positions 149 and 179 each coordinate a divalent metal cation. The tract at residues 244 to 279 (YVEFNLLYDRGTKFGLMTDGNVEAILMSLPPEVKFN) is important for dimerization.

Belongs to the aerobic coproporphyrinogen-III oxidase family. Homodimer. A divalent metal cation is required as a cofactor.

Its subcellular location is the cytoplasm. The enzyme catalyses coproporphyrinogen III + O2 + 2 H(+) = protoporphyrinogen IX + 2 CO2 + 2 H2O. It functions in the pathway porphyrin-containing compound metabolism; protoporphyrin-IX biosynthesis; protoporphyrinogen-IX from coproporphyrinogen-III (O2 route): step 1/1. Functionally, involved in the heme biosynthesis. Catalyzes the aerobic oxidative decarboxylation of propionate groups of rings A and B of coproporphyrinogen-III to yield the vinyl groups in protoporphyrinogen-IX. The polypeptide is Oxygen-dependent coproporphyrinogen-III oxidase (Rickettsia conorii (strain ATCC VR-613 / Malish 7)).